The sequence spans 740 residues: Isocitrate dehydrogenase [NADP] 2 (740 aa).

NADP(+) is bound by residues asparagine 83 and serine 85. Residues serine 130, asparagine 133, arginine 137, arginine 143, and lysine 253 each contribute to the D-threo-isocitrate site. Asparagine 133 is an NADP(+) binding site. Aspartate 348 provides a ligand contact to Mg(2+). D-threo-isocitrate-binding residues include tyrosine 418 and arginine 546. Aspartate 547 and aspartate 551 together coordinate Mg(2+). Positions 584, 588, 599, 601, and 648 each coordinate NADP(+).

It belongs to the monomeric-type IDH family. Monomer. Mg(2+) is required as a cofactor. The cofactor is Mn(2+).

The catalysed reaction is D-threo-isocitrate + NADP(+) = 2-oxoglutarate + CO2 + NADPH. IDH activity is not significantly affected by monovalent cations. The combined addition of Mn(2+) and another divalent cation results in the decrease of the activity. Catalyzes the oxidative decarboxylation of isocitrate to 2-oxoglutarate and carbon dioxide with the concomitant reduction of NADP(+). Cannot use NAD(+). The polypeptide is Isocitrate dehydrogenase [NADP] 2 (Psychrobacter sp. (strain 13A)).